The primary structure comprises 1366 residues: Protein HUA2-LIKE 2 (1366 aa).

The PWWP domain maps to 24 to 81 (VGDLVLAKVKGFPAWPAVVSEPEKWDASPDSKKVFVHFFGTQQIAFCNPGDVEAFTEE). The span at 111 to 124 (LKQQERASDPKSAE) shows a compositional bias: basic and acidic residues. Disordered regions lie at residues 111–138 (LKQQERASDPKSAEEGTLGSAENTTLMP), 203–319 (TYSS…SGSK), 384–403 (NVQTSQNSHEKFTERPCEEN), 427–451 (EANSSLQAEERSPKDTVVSATAQTS), and 787–808 (SESANDMQNNSSGSPNIPTGEK). Over residues 213–252 (VRSQNCAPQNETCPVQRSKSPSRLQTEKLQSSMLQNSDGG) the composition is skewed to polar residues. Residues 391–403 (SHEKFTERPCEEN) are compositionally biased toward basic and acidic residues. A compositionally biased stretch (polar residues) spans 787 to 803 (SESANDMQNNSSGSPNI). The CID domain occupies 836-977 (DVQSTRESYE…HHIRELDSHS (142 aa)). Disordered regions lie at residues 1027–1076 (LKDE…TAER) and 1128–1366 (TSHQ…QRSD). The span at 1032-1052 (GGSDSEGGCDSEGGSDSDGGD) shows a compositional bias: acidic residues. The span at 1057-1066 (TPEHESRILE) shows a compositional bias: basic and acidic residues. Over residues 1138–1152 (PPLPSSSPPPPPAPP) the composition is skewed to pro residues. Residues 1191–1223 (LSGSTMHYQGPESSYISGVQLTNSIPQADGSNF) are compositionally biased toward polar residues. The span at 1229–1244 (PSHPHPHPPPPPPPPQ) shows a compositional bias: pro residues. Composition is skewed to basic and acidic residues over residues 1251 to 1262 (EPGHVLKSHRDA) and 1275 to 1298 (CDERNFHDNHERMRHAPFENRDNW). Over residues 1299 to 1309 (RYPPSSSYGSR) the composition is skewed to low complexity.

As to expression, expressed throughout young primordia, and vegetative and reproductive apices.

The protein resides in the nucleus. Its function is as follows. Probable transcription factor that acts with partial redundancy with HULK1 and HULK3. Plays diverse and essential roles in the control of plant development, physiology and flowering time. The polypeptide is Protein HUA2-LIKE 2 (Arabidopsis thaliana (Mouse-ear cress)).